We begin with the raw amino-acid sequence, 194 residues long: Exopolysaccharide II synthesis transcriptional activator ExpG (194 aa).

An HTH marR-type domain is found at 49 to 184 (YFELARVMER…AFQTLHRLEL (136 aa)).

In terms of biological role, transcriptional activator of genes for galactoglucan synthesis (exopolysaccharide II or EPS II). This is Exopolysaccharide II synthesis transcriptional activator ExpG (expG) from Rhizobium meliloti (strain 1021) (Ensifer meliloti).